A 262-amino-acid polypeptide reads, in one-letter code: Malonyl-[acyl-carrier protein] O-methyltransferase (262 aa).

It belongs to the methyltransferase superfamily.

It catalyses the reaction malonyl-[ACP] + S-adenosyl-L-methionine = malonyl-[ACP] methyl ester + S-adenosyl-L-homocysteine. Its pathway is cofactor biosynthesis; biotin biosynthesis. Functionally, converts the free carboxyl group of a malonyl-thioester to its methyl ester by transfer of a methyl group from S-adenosyl-L-methionine (SAM). It allows to synthesize pimeloyl-ACP via the fatty acid synthetic pathway. This is Malonyl-[acyl-carrier protein] O-methyltransferase from Dechloromonas aromatica (strain RCB).